Consider the following 382-residue polypeptide: Protein RecA (382 aa).

Position 79–86 (79–86) interacts with ATP; it reads GPESSGKT. The segment at 362 to 382 is disordered; that stretch reads ATKSAAKGSEVQADVKTKGAA.

It belongs to the RecA family.

It is found in the cytoplasm. Its function is as follows. Can catalyze the hydrolysis of ATP in the presence of single-stranded DNA, the ATP-dependent uptake of single-stranded DNA by duplex DNA, and the ATP-dependent hybridization of homologous single-stranded DNAs. It interacts with LexA causing its activation and leading to its autocatalytic cleavage. The sequence is that of Protein RecA from Synechococcus sp. (strain WH7803).